We begin with the raw amino-acid sequence, 160 residues long: Peptidyl-prolyl cis-trans isomerase CYP18-1 (160 aa).

Residues 3–153 (VTLHTNLGDI…AEIRLNRVTI (151 aa)) enclose the PPIase cyclophilin-type domain.

This sequence belongs to the cyclophilin-type PPIase family. Ubiquitous.

Its subcellular location is the cytoplasm. It carries out the reaction [protein]-peptidylproline (omega=180) = [protein]-peptidylproline (omega=0). In terms of biological role, PPIases accelerate the folding of proteins. It catalyzes the cis-trans isomerization of proline imidic peptide bonds in oligopeptides. The chain is Peptidyl-prolyl cis-trans isomerase CYP18-1 (CYP18-1) from Arabidopsis thaliana (Mouse-ear cress).